The sequence spans 143 residues: Ribonuclease P protein component 2 (143 aa).

Belongs to the eukaryotic/archaeal RNase P protein component 2 family. In terms of assembly, consists of a catalytic RNA component and at least 4-5 protein subunits.

It is found in the cytoplasm. It catalyses the reaction Endonucleolytic cleavage of RNA, removing 5'-extranucleotides from tRNA precursor.. Part of ribonuclease P, a protein complex that generates mature tRNA molecules by cleaving their 5'-ends. The protein is Ribonuclease P protein component 2 of Saccharolobus solfataricus (strain ATCC 35092 / DSM 1617 / JCM 11322 / P2) (Sulfolobus solfataricus).